A 161-amino-acid chain; its full sequence is 3-isopropylmalate dehydratase small subunit (161 aa).

It belongs to the LeuD family. LeuD type 2 subfamily. In terms of assembly, heterodimer of LeuC and LeuD.

It carries out the reaction (2R,3S)-3-isopropylmalate = (2S)-2-isopropylmalate. It participates in amino-acid biosynthesis; L-leucine biosynthesis; L-leucine from 3-methyl-2-oxobutanoate: step 2/4. Its function is as follows. Catalyzes the isomerization between 2-isopropylmalate and 3-isopropylmalate, via the formation of 2-isopropylmaleate. The protein is 3-isopropylmalate dehydratase small subunit of Metallosphaera sedula (strain ATCC 51363 / DSM 5348 / JCM 9185 / NBRC 15509 / TH2).